A 679-amino-acid chain; its full sequence is MHLFACLCIVLSFLEGVGCLCPSQCTCDYHGRNDGSGSRLVLCNDMDMNELPTNLPVDTVKLRIEKTVIRRISAEAFYYLVELQYLWVTYNSVASIDPSSFYNLKQLHELRLDGNSLAAFPWASLLDMPLLRTLDLHNNKITSVPNEALRYLKNLAYLDLSSNRLTTLPPDFLESWTHLVSTPSGVLDLSPSRIILGLQDNPWFCDCHISKMIELSKVVDPAIVLLDPLMTCSEPERLTGILFQRAELEHCLKPSVMTSATKIMSALGSNVLLRCDATGFPTPQITWTRSDSSPVNYTVIQESPEEGVRWSIMSLTGISSKDAGDYKCKAKNLAGMSEAVVTVTVLGITTTPIPPDTSERTGDHPEWDVQPGSGRSTSVSSASSYLWSSSFSPTSSFSASTLSPPSTASFSLSPFSSSTVSSTTTLSTSISASTTMANKRSFQLHQGGKRNLKVAKNGSKLPPASTSKKEELALLDQTMLTETNAAIENLRVVSETKESVTLTWNMINTTHNSAVTVLYSKYGGKDLLLLNADSSKNQVTIDGLEPGGQYMACVCPKGVPPQKDQCITFSTERVEGDDSQWSLLLVVTSTACVVILPLICFLLYKVCKLQCKSEPFWEDDLAKETYIQFETLFPRSQSVGELWTRSHRDDSEKLLLCSRSSVESQVTFKSEGSRPEYYC.

Residues 1–19 (MHLFACLCIVLSFLEGVGC) form the signal peptide. The Lumenal segment spans residues 20–582 (LCPSQCTCDY…RVEGDDSQWS (563 aa)). LRR repeat units follow at residues 56–79 (PVDTVKLRIEKTVIRRISAEAFYY), 80–103 (LVELQYLWVTYNSVASIDPSSFYN), 104–128 (LKQLHELRLDGNSLAAFPWASLLDM), 129–151 (PLLRTLDLHNNKITSVPNEALRY), and 152–175 (LKNLAYLDLSSNRLTTLPPDFLES). The region spanning 201 to 253 (NPWFCDCHISKMIELSKVVDPAIVLLDPLMTCSEPERLTGILFQRAELEHCLK) is the LRRCT domain. The region spanning 254-344 (PSVMTSATKI…GMSEAVVTVT (91 aa)) is the Ig-like domain. A disulfide bridge links C275 with C328. N-linked (GlcNAc...) asparagine glycosylation occurs at N296. The interval 351–375 (TPIPPDTSERTGDHPEWDVQPGSGR) is disordered. The span at 357–367 (TSERTGDHPEW) shows a compositional bias: basic and acidic residues. The Fibronectin type-III domain occupies 486-574 (AIENLRVVSE…QCITFSTERV (89 aa)). Residues 583–603 (LLLVVTSTACVVILPLICFLL) form a helical membrane-spanning segment. Over 604–679 (YKVCKLQCKS…SEGSRPEYYC (76 aa)) the chain is Cytoplasmic.

Post-translationally, glycosylated. Detected in the outer plexiform layer (OPL) of the retina where it localizes to ON-bipolar cells (at protein level).

It localises to the cell projection. The protein localises to the dendrite. Its subcellular location is the perikaryon. The protein resides in the endoplasmic reticulum membrane. In terms of biological role, plays a role in the synapse formation and synaptic transmission between cone photoreceptor cells and retinal bipolar cells. Required for normal transmission of a light-evoked stimulus from the cone photoreceptor cells to the ON-bipolar cells and ON-ganglion cells in the inner retina. Required in retinal ON-bipolar cells for normal localization of the cation channel TRPM1 at dendrite tips. Seems to play a specific role in synaptic contacts made by ON-bipolar cells with cone photoreceptor pedicles. May also have a role in cone synapse formation. Might facilitate FGFR1 exit from the endoplasmic reticulum to the Golgi. Could be a regulator of the FGFRs. This chain is Leucine-rich repeat, immunoglobulin-like domain and transmembrane domain-containing protein 3 (LRIT3), found in Homo sapiens (Human).